Consider the following 183-residue polypeptide: Inner membrane-spanning protein YciB (183 aa).

5 consecutive transmembrane segments (helical) span residues 19-39 (LYGV…QLIV), 53-73 (IMGI…DLNF), 76-96 (WKVT…QFVF), 121-141 (LGWA…SYYF), and 151-171 (TFGF…YLYP).

It belongs to the YciB family.

The protein localises to the cell inner membrane. Its function is as follows. Plays a role in cell envelope biogenesis, maintenance of cell envelope integrity and membrane homeostasis. The sequence is that of Inner membrane-spanning protein YciB from Actinobacillus pleuropneumoniae serotype 5b (strain L20).